The chain runs to 593 residues: Proteasome-associated ATPase (593 aa).

Residues 5–94 (DDADSRAARW…KEEIDRLAQP (90 aa)) adopt a coiled-coil conformation. ATP is bound at residue 281 to 286 (GCGKTL). Residues 574–593 (GKGADAGRSIETASNTGQYL) are disordered. The segment covering 584-593 (ETASNTGQYL) has biased composition (polar residues). The docks into pockets in the proteasome alpha-ring stretch occupies residues 592-593 (YL).

It belongs to the AAA ATPase family. As to quaternary structure, homohexamer. Assembles into a hexameric ring structure that caps the 20S proteasome core. Strongly interacts with the prokaryotic ubiquitin-like protein Pup through a hydrophobic interface; the interacting region of ARC lies in its N-terminal coiled-coil domain. There is one Pup binding site per ARC hexamer ring. Upon ATP-binding, the C-terminus of ARC interacts with the alpha-rings of the proteasome core, possibly by binding to the intersubunit pockets.

Its pathway is protein degradation; proteasomal Pup-dependent pathway. In terms of biological role, ATPase which is responsible for recognizing, binding, unfolding and translocation of pupylated proteins into the bacterial 20S proteasome core particle. May be essential for opening the gate of the 20S proteasome via an interaction with its C-terminus, thereby allowing substrate entry and access to the site of proteolysis. Thus, the C-termini of the proteasomal ATPase may function like a 'key in a lock' to induce gate opening and therefore regulate proteolysis. This Salinispora tropica (strain ATCC BAA-916 / DSM 44818 / JCM 13857 / NBRC 105044 / CNB-440) protein is Proteasome-associated ATPase.